The chain runs to 109 residues: Large ribosomal subunit protein uL22 (109 aa).

The protein belongs to the universal ribosomal protein uL22 family. In terms of assembly, part of the 50S ribosomal subunit.

Its function is as follows. This protein binds specifically to 23S rRNA; its binding is stimulated by other ribosomal proteins, e.g. L4, L17, and L20. It is important during the early stages of 50S assembly. It makes multiple contacts with different domains of the 23S rRNA in the assembled 50S subunit and ribosome. The globular domain of the protein is located near the polypeptide exit tunnel on the outside of the subunit, while an extended beta-hairpin is found that lines the wall of the exit tunnel in the center of the 70S ribosome. The chain is Large ribosomal subunit protein uL22 from Cupriavidus taiwanensis (strain DSM 17343 / BCRC 17206 / CCUG 44338 / CIP 107171 / LMG 19424 / R1) (Ralstonia taiwanensis (strain LMG 19424)).